The chain runs to 264 residues: Zearalenone hydrolase (264 aa).

The region spanning 27-207 is the AB hydrolase-1 domain; it reads VLVPDGLGEC…KDLEALRGKP (181 aa). Residues Gly-32, Ser-102, and Ser-103 each contribute to the zearalenone site. Residue Ser-102 is part of the active site. Residue Glu-126 is part of the active site. The zearalenone site is built by Trp-183, Tyr-187, Ser-220, and His-242. The active site involves His-242.

It belongs to the AB hydrolase superfamily. Hydrolase RutD family. As to quaternary structure, homodimer.

The catalysed reaction is zearalenone + H2O = hydrolyzed zearalenone + H(+). In terms of biological role, lactonohydrolase that specifically hydrolyzes and deactivates the mycotoxin zearalenone (ZEN) and its zearalenol (ZOL) derivatives. ZHD101 prefers ZEN to ZOL as its substrate, but ZOL, especially the alpha-form, shows higher estrogenic toxicity than ZEN. This Bionectria ochroleuca (Gliocladium roseum) protein is Zearalenone hydrolase.